The primary structure comprises 144 residues: Large ribosomal subunit protein uL13 (144 aa).

Belongs to the universal ribosomal protein uL13 family. In terms of assembly, part of the 50S ribosomal subunit.

Its function is as follows. This protein is one of the early assembly proteins of the 50S ribosomal subunit, although it is not seen to bind rRNA by itself. It is important during the early stages of 50S assembly. This chain is Large ribosomal subunit protein uL13, found in Clostridium botulinum (strain Alaska E43 / Type E3).